Here is a 596-residue protein sequence, read N- to C-terminus: Proton channel OTOP3 (596 aa).

The span at 1–21 (MGRGARAAAAQSRWGRASRAS) shows a compositional bias: low complexity. The interval 1–59 (MGRGARAAAAQSRWGRASRASVSPGRTIRSAPAVGEAQETEAAPEKENRVDVGAEERAA) is disordered. The Cytoplasmic segment spans residues 1–88 (MGRGARAAAA…RDRQAQKAGQ (88 aa)). 2 positions are modified to phosphoserine: S21 and S23. The segment covering 43 to 59 (APEKENRVDVGAEERAA) has biased composition (basic and acidic residues). Residues 89-109 (LFSGLLALNVVFLGGAFICSM) traverse the membrane as a helical segment. The Extracellular segment spans residues 110–119 (IFNKVAVTLG). A helical transmembrane segment spans residues 120-143 (DVWILLATLKVLSLLWLLYYVAST). Topologically, residues 144–159 (TRRPHAVLYQDPHAGP) are cytoplasmic. The helical transmembrane segment at 160–181 (LWVRGSLVLFGSCTFCLNIFRV) threads the bilayer. Residues 182–193 (GYDVSHIRCKSQ) lie on the Extracellular side of the membrane. The helical transmembrane segment at 194–217 (LDLVFSVIEMVFIGVQTWVLWKHC) threads the bilayer. The Cytoplasmic segment spans residues 218 to 225 (KDCVRVQT). The helical transmembrane segment at 226–248 (NFTRCGLMLTLATNLLLWVLAVT) threads the bilayer. Residues 249-295 (NDSMHREIEAELGILMEKSTGNETNTCLCLNATACEAFRRGFLMLYP) lie on the Extracellular side of the membrane. A helical transmembrane segment spans residues 296 to 312 (FSTEYCLICCAVLFVMW). The Cytoplasmic portion of the chain corresponds to 313 to 338 (KNVGRHVAPHMGAHPATAPFHLHGAI). A helical transmembrane segment spans residues 339–358 (FGPLLGLLVLLAGVCVFVLF). Residues 359–372 (QIEASGPAIACQYF) are Extracellular-facing. The helical transmembrane segment at 373–395 (TLYYAFYVAVLPTMSLACLAGTA) threads the bilayer. The Cytoplasmic segment spans residues 396 to 413 (IHGLEERELDTVKNPTRS). A helical membrane pass occupies residues 414–435 (LDVVLLMGAALGQMGIAYFSIV). Over 436-446 (AIVAKRPHELL) the chain is Extracellular. A helical transmembrane segment spans residues 447–469 (NRLILAYSLLLILQHIAQNLFII). At 470–529 (EGLHRRPLWETVPEGLAGKQEAEPPRRGSLLELGQGLQRASLAYIHSYSHLNWKRRALKE) the chain is on the cytoplasmic side. A helical membrane pass occupies residues 530–547 (ISLFLILCNITLWMMPAF). Residues 548-566 (GIHPEFENGLEKDFYGYQI) are Extracellular-facing. Residues 567–589 (WFAIVNFGLPLGVFYRMHSVGGL) traverse the membrane as a helical segment. Over 590–596 (VEVYLGA) the chain is Cytoplasmic.

This sequence belongs to the otopetrin family. Homodimer.

It localises to the cell membrane. The enzyme catalyses H(+)(in) = H(+)(out). Activated by extracellular acidification. Activated by Zn(2+) under non-acidic conditions. Its function is as follows. Proton-selective channel gated by extracellular protons. This is Proton channel OTOP3 from Homo sapiens (Human).